We begin with the raw amino-acid sequence, 226 residues long: Cytidylate kinase (226 aa).

An ATP-binding site is contributed by 10-18 (GFSSTGKST).

This sequence belongs to the cytidylate kinase family. Type 1 subfamily.

It is found in the cytoplasm. The enzyme catalyses CMP + ATP = CDP + ADP. The catalysed reaction is dCMP + ATP = dCDP + ADP. The polypeptide is Cytidylate kinase (Flavobacterium psychrophilum (strain ATCC 49511 / DSM 21280 / CIP 103535 / JIP02/86)).